Reading from the N-terminus, the 109-residue chain is Large ribosomal subunit protein uL22 (109 aa).

It belongs to the universal ribosomal protein uL22 family. In terms of assembly, part of the 50S ribosomal subunit.

In terms of biological role, this protein binds specifically to 23S rRNA; its binding is stimulated by other ribosomal proteins, e.g. L4, L17, and L20. It is important during the early stages of 50S assembly. It makes multiple contacts with different domains of the 23S rRNA in the assembled 50S subunit and ribosome. The globular domain of the protein is located near the polypeptide exit tunnel on the outside of the subunit, while an extended beta-hairpin is found that lines the wall of the exit tunnel in the center of the 70S ribosome. The protein is Large ribosomal subunit protein uL22 of Psychrobacter cryohalolentis (strain ATCC BAA-1226 / DSM 17306 / VKM B-2378 / K5).